Consider the following 286-residue polypeptide: Prepilin leader peptidase/N-methyltransferase (286 aa).

A helical membrane pass occupies residues 10 to 30 (FAVPLAAVLGLLVGSFLNVVI). 4 residues coordinate Zn(2+): C70, C73, C95, and C98. A run of 6 helical transmembrane segments spans residues 102–122 (ISIR…LVAW), 126–146 (WSWI…LTFI), 157–177 (MTLP…FVPL), 181–201 (VLGA…YKLL), 224–244 (ISAL…AAIV), and 250–270 (GRHF…FTAN).

It belongs to the peptidase A24 family. Zn(2+) serves as cofactor.

Its subcellular location is the cell inner membrane. The enzyme catalyses Typically cleaves a -Gly-|-Phe- bond to release an N-terminal, basic peptide of 5-8 residues from type IV prepilin, and then N-methylates the new N-terminal amino group, the methyl donor being S-adenosyl-L-methionine.. Its function is as follows. Plays an essential role in type IV pili and type II pseudopili formation by proteolytically removing the leader sequence from substrate proteins and subsequently monomethylating the alpha-amino group of the newly exposed N-terminal phenylalanine. The chain is Prepilin leader peptidase/N-methyltransferase (pilD) from Neisseria gonorrhoeae.